Here is a 787-residue protein sequence, read N- to C-terminus: Pleckstrin homology domain-containing family G member 6 (787 aa).

In terms of domain architecture, DH spans 161 to 353; it reads HQQEALWELL…ESFLRHINGQ (193 aa). The PH domain occupies 409–509; the sequence is QLLLEGPVRV…WLEKTQHAQT (101 aa). Residues 533–762 are disordered; that stretch reads QGTESPSTRP…EPGNGKPRRL (230 aa). Residues 535–557 show a composition bias toward low complexity; sequence TESPSTRPSTPSPSPEDSQSSAE. The span at 724–742 shows a compositional bias: basic and acidic residues; that stretch reads LRPRSLREDMLREIREELA.

In terms of assembly, interacts with MYH10. Interacts with ELMO1 and EZR (in an open conformation). Interacts with CSPP1.

It is found in the cell projection. Its subcellular location is the microvillus. It localises to the cytoplasm. The protein resides in the cytoskeleton. The protein localises to the spindle. It is found in the cleavage furrow. In terms of biological role, guanine nucleotide exchange factor activating the small GTPase RHOA, which, in turn, induces myosin filament formation. Also activates RHOG. Does not activate RAC1, or to a much lower extent than RHOA and RHOG. Part of a functional unit, involving PLEKHG6, MYH10 and RHOA, at the cleavage furrow to advance furrow ingression during cytokinesis. In epithelial cells, required for the formation of microvilli and membrane ruffles on the apical pole. Along with EZR, required for normal macropinocytosis. This Mus musculus (Mouse) protein is Pleckstrin homology domain-containing family G member 6 (Plekhg6).